The primary structure comprises 76 residues: MAETDPKTVQDLTSVVQTLLQQMQDKFQTMSDQIIGRIDDMSSRIDDLEKNIADLMTQAGVEELESENKIPATQKS.

Belongs to the HSBP1 family. Homohexamer. Associates with heptad repeats of HSF1 trimers and probably also HSF1 monomers, and with HSP70. Association with HSF1 trimers and HSP70 coincides with attenuation of heat shock response and the conversion of HSF1 trimer to monomer.

The protein resides in the nucleus. Negative regulator of the heat shock response. Negatively affects HSF1 DNA-binding activity. May have a role in the suppression of the activation of the stress response during the aging process. In Homo sapiens (Human), this protein is Heat shock factor-binding protein 1 (HSBP1).